A 117-amino-acid polypeptide reads, in one-letter code: Heat shock 70 kDa protein 1-like (117 aa).

Residues 72-75 (ERAK) and 84-87 (GSTR) each bind ATP.

Belongs to the heat shock protein 70 family. Interacts with PRKN. Detected at higher levels in caput epididymal spermatazoa than in cauda epididymal spermatazoa (at protein level).

Its function is as follows. Molecular chaperone implicated in a wide variety of cellular processes, including protection of the proteome from stress, folding and transport of newly synthesized polypeptides, activation of proteolysis of misfolded proteins and the formation and dissociation of protein complexes. Plays a pivotal role in the protein quality control system, ensuring the correct folding of proteins, the re-folding of misfolded proteins and controlling the targeting of proteins for subsequent degradation. This is achieved through cycles of ATP binding, ATP hydrolysis and ADP release, mediated by co-chaperones. The affinity for polypeptides is regulated by its nucleotide bound state. In the ATP-bound form, it has a low affinity for substrate proteins. However, upon hydrolysis of the ATP to ADP, it undergoes a conformational change that increases its affinity for substrate proteins. It goes through repeated cycles of ATP hydrolysis and nucleotide exchange, which permits cycles of substrate binding and release. Positive regulator of PRKN translocation to damaged mitochondria. In Mesocricetus auratus (Golden hamster), this protein is Heat shock 70 kDa protein 1-like.